We begin with the raw amino-acid sequence, 346 residues long: Protein RecA (346 aa).

67-74 is a binding site for ATP; it reads GPESSGKT.

Belongs to the RecA family.

The protein resides in the cytoplasm. Its function is as follows. Can catalyze the hydrolysis of ATP in the presence of single-stranded DNA, the ATP-dependent uptake of single-stranded DNA by duplex DNA, and the ATP-dependent hybridization of homologous single-stranded DNAs. It interacts with LexA causing its activation and leading to its autocatalytic cleavage. In Mycobacteroides abscessus (strain ATCC 19977 / DSM 44196 / CCUG 20993 / CIP 104536 / JCM 13569 / NCTC 13031 / TMC 1543 / L948) (Mycobacterium abscessus), this protein is Protein RecA.